A 156-amino-acid polypeptide reads, in one-letter code: ATP synthase subunit b (156 aa).

A helical transmembrane segment spans residues 7-27 (FFAQMVVFFILWWVVAKFIWP).

The protein belongs to the ATPase B chain family. F-type ATPases have 2 components, F(1) - the catalytic core - and F(0) - the membrane proton channel. F(1) has five subunits: alpha(3), beta(3), gamma(1), delta(1), epsilon(1). F(0) has three main subunits: a(1), b(2) and c(10-14). The alpha and beta chains form an alternating ring which encloses part of the gamma chain. F(1) is attached to F(0) by a central stalk formed by the gamma and epsilon chains, while a peripheral stalk is formed by the delta and b chains.

The protein resides in the cell inner membrane. Its function is as follows. F(1)F(0) ATP synthase produces ATP from ADP in the presence of a proton or sodium gradient. F-type ATPases consist of two structural domains, F(1) containing the extramembraneous catalytic core and F(0) containing the membrane proton channel, linked together by a central stalk and a peripheral stalk. During catalysis, ATP synthesis in the catalytic domain of F(1) is coupled via a rotary mechanism of the central stalk subunits to proton translocation. Functionally, component of the F(0) channel, it forms part of the peripheral stalk, linking F(1) to F(0). The protein is ATP synthase subunit b of Cupriavidus necator (strain ATCC 17699 / DSM 428 / KCTC 22496 / NCIMB 10442 / H16 / Stanier 337) (Ralstonia eutropha).